The chain runs to 51 residues: Suberization-associated anionic peroxidase 1 (51 aa).

His-30 is a binding site for heme. Residue Thr-31 coordinates Ca(2+).

Belongs to the peroxidase family. Classical plant (class III) peroxidase subfamily. Heme b is required as a cofactor. The cofactor is Ca(2+).

Its subcellular location is the secreted. It carries out the reaction 2 a phenolic donor + H2O2 = 2 a phenolic radical donor + 2 H2O. In terms of biological role, removal of H(2)O(2), oxidation of toxic reductants, biosynthesis and degradation of lignin, suberization, auxin catabolism, response to environmental stresses such as wounding, pathogen attack and oxidative stress. These functions might be dependent on each isozyme/isoform in each plant tissue. Suggested to catalyze the deposition of the aromatic residues of suberin on the cell wall and thus play a role in cell-suberization. This is Suberization-associated anionic peroxidase 1 from Capsicum annuum (Capsicum pepper).